The sequence spans 279 residues: Protein phosphatase 1 regulatory subunit 3E (279 aa).

S16 and S33 each carry phosphoserine. The tract at residues 28 to 89 (RSQRPSLEEE…RSPDTRKRVR (62 aa)) is disordered. Residues 51 to 65 (ARSRAHVPGRGRRAR) show a composition bias toward basic residues. The residue at position 66 (S66) is a Phosphoserine. The PP1-binding motif motif lies at 87–90 (RVRF). The region spanning 154–259 (AARLQAQRIC…NNGGRDYALL (106 aa)) is the CBM21 domain. The tract at residues 176–198 (GSARVLDLAYEKRVSVRWSADGW) is glycogen-binding motif. Residues 248-256 (WDNNGGRDY) are substrate-binding motif.

In terms of tissue distribution, expressed in liver and heart, with low levels in skeletal muscle.

Its function is as follows. Acts as a glycogen-targeting subunit for PP1. PP1 is involved in glycogen metabolism and contributes to the activation of glycogen synthase leading to an increase in glycogen synthesis. This Rattus norvegicus (Rat) protein is Protein phosphatase 1 regulatory subunit 3E (Ppp1r3e).